We begin with the raw amino-acid sequence, 891 residues long: Major core protein OPG136 precursor (891 aa).

Positions 615–697 (SPEGEETIIC…ILDRIITNAG (83 aa)) are excised as a propeptide.

It belongs to the orthopxvirus protein OPG136 family. Interacts with P39/A4. Post-translationally, the precursor is cleaved by OPG083 to give rise to the 62 kDa mature protein during virion maturation. Proteolytic cleavage of major core proteins OPG136, OPG129, and OPG098, which occurs at a late stage of core formation, is required for production of infectious mature virions (MV).

The protein resides in the virion. Its function is as follows. Core protein 4a is the most abundant virion protein. Major component of the virion core that undergoes proteolytic processing during the immature virion (IV) to mature virion (MV) transition. The protein is Major core protein OPG136 precursor (OPG136) of Cynomys gunnisoni (Gunnison's prairie dog).